The following is a 561-amino-acid chain: AT-rich interactive domain-containing protein 3B (561 aa).

N-acetylmethionine is present on M1. The span at 1-17 (MEPLQQQQQQQQQQQKQ) shows a compositional bias: low complexity. Disordered regions lie at residues 1–36 (MEPL…QQMR), 53–122 (LSAT…SKYF), and 136–179 (PMSN…WNLD). A Phosphoserine modification is found at S89. Positions 90–109 (EPEEEDGGLEDEDGDDEVAE) are enriched in acidic residues. The segment covering 152 to 162 (QAKEDHTKDAS) has biased composition (basic and acidic residues). Positions 164–178 (ASPSVSTAGQPNWNL) are enriched in polar residues. Phosphoserine is present on S165. The interaction with RB1 stretch occupies residues 203–365 (SRDFAKLYEL…SPPKIRFPIL (163 aa)). One can recognise an ARID domain in the interval 215-307 (DPERKEFLDD…YLYAYECEKK (93 aa)). S311 is modified (phosphoserine). At R361 the chain carries Asymmetric dimethylarginine. The segment at 370-397 (SSGTNTSSPRISPATTLRKGDGAPVTTV) is disordered. The 99-residue stretch at 419–517 (AALEQLRERL…GVLFAQKPVV (99 aa)) folds into the REKLES domain. Residues 490 to 513 (SSIGSINMSVDIDGTTYAGVLFAQ) form an interaction with ARID3A region. Low complexity predominate over residues 523-552 (SAPQSLGSSASSSSSSHCSPSPTSSRGTPS). The interval 523-561 (SAPQSLGSSASSSSSSHCSPSPTSSRGTPSAEPSTSWSL) is disordered.

In terms of assembly, heterodimer with ARID3A. Interacts with unphosphorylated RB1. In terms of tissue distribution, expressed in placenta, testis and leukocytes. Expressed in neuroblastoma. Present in K-562 erythrocytic leukemia cell line (at protein level).

It localises to the nucleus. Functionally, transcription factor which may be involved in neuroblastoma growth and malignant transformation. Favors nuclear targeting of ARID3A. In Homo sapiens (Human), this protein is AT-rich interactive domain-containing protein 3B (ARID3B).